Reading from the N-terminus, the 419-residue chain is MAMRLILFFGALFGHIYCLETFVGDQVLEIVPSNEEQIKNLLQLEAQEHLQLDFWKSPTTPGETAHVRVPFVNVQAVKVFLESQGIAYSIMIEDVQVLLDKENEEMLFNRRRERSGNFNFGAYHTLEEISQEMDNLVAEHPGLVSKVNIGSSFENRPMNVLKFSTGGDKPAIWLDAGIHAREWVTQATALWTANKIVSDYGKDPSITSILDALDIFLLPVTNPDGYVFSQTKNRMWRKTRSKVSGSLCVGVDPNRNWDAGFGGPGASSNPCSDSYHGPSANSEVEVKSIVDFIKSHGKVKAFITLHSYSQLLMFPYGYKCTKLDDFDELSEVAQKAAQSLRSLHGTKYKVGPICSVIYQASGGSIDWSYDYGIKYSFAFELRDTGRYGFLLPARQILPTAEETWLGLKAIMEHVRDHPY.

Residues 1-18 (MAMRLILFFGALFGHIYC) form the signal peptide. A propeptide spans 19–114 (LETFVGDQVL…EMLFNRRRER (96 aa)) (activation peptide). The Peptidase M14 domain maps to 122–414 (AYHTLEEISQ…LGLKAIMEHV (293 aa)). Residues His-179 and Glu-182 each contribute to the Zn(2+) site. Substrate-binding positions include 179 to 182 (HARE), Arg-237, and 254 to 255 (NR). A disulfide bond links Cys-248 and Cys-271. A Zn(2+)-binding site is contributed by His-306. 307–308 (SY) serves as a coordination point for substrate. A disulfide bond links Cys-320 and Cys-354. Position 358 (Tyr-358) interacts with substrate. The active-site Proton donor/acceptor is Glu-380.

Belongs to the peptidase M14 family. Zn(2+) serves as cofactor.

It localises to the secreted. The catalysed reaction is Similar to that of carboxypeptidase A (EC 3.4.17.1), but with a preference for bulkier C-terminal residues.. Functionally, carboxypeptidase that catalyzes the release of a C-terminal amino acid, with a preference for large aromatic C-terminal residues. The protein is Carboxypeptidase A2 (CPA2) of Homo sapiens (Human).